The following is a 128-amino-acid chain: Protein ripply2 (128 aa).

The segment at 1–64 (MDTTESAESA…ALPSGPGMAE (64 aa)) is disordered. Low complexity predominate over residues 17–28 (PSRSRCPPSAQP). The short motif at 34–37 (WRPW) is the WRPW motif element. The ripply homology domain stretch occupies residues 74–109 (HPVRLFWPKSKCYDYLYQEAETLLKNFPIQATISFY).

The protein belongs to the ripply family. Expressed in the embryonic anterior presomitic mesoderm. First expressed in S-I at 8.5 dpc, where expression is maintained until 13.5 dpc, with an additional stripe of expression sometimes seen in the rostral part of S0 and S-I.

It is found in the nucleus. Plays a role in somitogenesis. Required for somite segregation and establishment of rostrocaudal polarity in somites. The sequence is that of Protein ripply2 from Mus musculus (Mouse).